Consider the following 149-residue polypeptide: Large ribosomal subunit protein bL9 (149 aa).

The protein belongs to the bacterial ribosomal protein bL9 family.

Functionally, binds to the 23S rRNA. The chain is Large ribosomal subunit protein bL9 from Endomicrobium trichonymphae.